The chain runs to 255 residues: Testis-specific H1 histone (255 aa).

Residues Met-1–Ser-54 are disordered. Ser-56 carries the post-translational modification Phosphoserine. Over residues Lys-124–Arg-134 the composition is skewed to basic residues. The segment at Lys-124–Gln-255 is disordered. Residues Arg-142 to Arg-152 are compositionally biased toward low complexity. Basic residues-rich tracts occupy residues Ser-153–Arg-166 and Arg-174–Pro-194. Composition is skewed to basic and acidic residues over residues Arg-195–Gly-230 and Lys-238–Lys-248.

The protein belongs to the histone H1/H5 family. Testis-specific.

The protein localises to the nucleus. Its subcellular location is the chromosome. In terms of biological role, essential for normal spermatogenesis and male fertility. Required for proper cell restructuring and DNA condensation during the elongation phase of spermiogenesis. Involved in the histone-protamine transition of sperm chromatin and the subsequent production of functional sperm. Binds both double-stranded and single-stranded DNA, ATP and protamine-1. This chain is Testis-specific H1 histone, found in Homo sapiens (Human).